A 460-amino-acid chain; its full sequence is Inactive 7-epi-sesquithujene synthase (460 aa).

Mg(2+) is bound by residues aspartate 308 and aspartate 312. Residues aspartate 308 and aspartate 312 each coordinate substrate. Positions 308 to 312 (DDMFD) match the DDXXD motif motif.

This sequence belongs to the terpene synthase family. In terms of assembly, monomer. Mg(2+) is required as a cofactor. It depends on Mn(2+) as a cofactor.

The protein resides in the cytoplasm. It functions in the pathway secondary metabolite biosynthesis; terpenoid biosynthesis. Functionally, non-functional sesquiterpene synthase due to a frameshift removing part of the catalytic site. The protein is Inactive 7-epi-sesquithujene synthase of Zea mays (Maize).